Consider the following 64-residue polypeptide: Large ribosomal subunit protein bL35 (64 aa).

Composition is skewed to basic residues over residues 1-26 (MPKM…KRSK) and 33-44 (LTKKSPKRKRKL). The tract at residues 1–44 (MPKMKTHRGAAKRFKKTGTGKIKRSKAYTSHILTKKSPKRKRKL) is disordered.

This sequence belongs to the bacterial ribosomal protein bL35 family.

The polypeptide is Large ribosomal subunit protein bL35 (Alkaliphilus oremlandii (strain OhILAs) (Clostridium oremlandii (strain OhILAs))).